We begin with the raw amino-acid sequence, 61 residues long: Small ribosomal subunit protein uS14 (61 aa).

Zn(2+) contacts are provided by C24, C27, C40, and C43.

Belongs to the universal ribosomal protein uS14 family. Zinc-binding uS14 subfamily. In terms of assembly, part of the 30S ribosomal subunit. Contacts proteins S3 and S10. Zn(2+) is required as a cofactor.

In terms of biological role, binds 16S rRNA, required for the assembly of 30S particles and may also be responsible for determining the conformation of the 16S rRNA at the A site. This chain is Small ribosomal subunit protein uS14, found in Halalkalibacterium halodurans (strain ATCC BAA-125 / DSM 18197 / FERM 7344 / JCM 9153 / C-125) (Bacillus halodurans).